Consider the following 91-residue polypeptide: DNA-directed RNA polymerase subunit omega (91 aa).

The protein belongs to the RNA polymerase subunit omega family. As to quaternary structure, the RNAP catalytic core consists of 2 alpha, 1 beta, 1 beta' and 1 omega subunit. When a sigma factor is associated with the core the holoenzyme is formed, which can initiate transcription.

The catalysed reaction is RNA(n) + a ribonucleoside 5'-triphosphate = RNA(n+1) + diphosphate. Its function is as follows. Promotes RNA polymerase assembly. Latches the N- and C-terminal regions of the beta' subunit thereby facilitating its interaction with the beta and alpha subunits. The sequence is that of DNA-directed RNA polymerase subunit omega from Shigella flexneri.